The chain runs to 204 residues: Urease accessory protein UreG (204 aa).

Residue 12 to 19 (GPVGSGKT) participates in GTP binding.

It belongs to the SIMIBI class G3E GTPase family. UreG subfamily. Homodimer. UreD, UreF and UreG form a complex that acts as a GTP-hydrolysis-dependent molecular chaperone, activating the urease apoprotein by helping to assemble the nickel containing metallocenter of UreC. The UreE protein probably delivers the nickel.

The protein resides in the cytoplasm. Its function is as follows. Facilitates the functional incorporation of the urease nickel metallocenter. This process requires GTP hydrolysis, probably effectuated by UreG. The sequence is that of Urease accessory protein UreG from Pseudomonas fluorescens (strain Pf0-1).